The chain runs to 470 residues: Origin of replication complex subunit 4 (470 aa).

Residue 63–70 (GPRGCGKA) participates in ATP binding.

Belongs to the ORC4 family. Component of the origin recognition complex (ORC) composed of at least ORC1, ORC2, ORC3, ORC4, ORC5 and ORC6. ORC is regulated in a cell-cycle and development dependent manner. It is sequentially assembled at the exit from anaphase of mitosis and disassembled as cells enter S phase. As to expression, expressed in the shoot apical meristem (SAM), leaves, ears and roots (including root tips).

Its subcellular location is the nucleus. In terms of biological role, component of the origin recognition complex (ORC) that binds origins of replication. DNA-binding is ATP-dependent. The specific DNA sequences that define origins of replication have not been identified yet. ORC is required to assemble the pre-replication complex necessary to initiate DNA replication. The polypeptide is Origin of replication complex subunit 4 (Oryza sativa subsp. japonica (Rice)).